Here is a 168-residue protein sequence, read N- to C-terminus: Peptide methionine sulfoxide reductase 2 (168 aa).

The region spanning 40–168 is the MsrB domain; the sequence is DVKWNDALTP…NSASLNLKKD (129 aa). Zn(2+) contacts are provided by Cys-79, Cys-82, Cys-128, and Cys-131. The cysteines at positions 97 and 157 are disulfide-linked. Residue Cys-157 is the Nucleophile of the active site.

The protein belongs to the MsrB Met sulfoxide reductase family. Zn(2+) serves as cofactor.

It catalyses the reaction L-methionyl-[protein] + [thioredoxin]-disulfide + H2O = L-methionyl-(R)-S-oxide-[protein] + [thioredoxin]-dithiol. Methionine-R-sulfoxide reductase which catalyzes the reduction of methionine sulfoxide (MetSO) to methionine in proteins. Plays a protective role against oxidative stress by restoring activity to proteins that have been inactivated by methionine oxidation. Protects iron-sulfur clusters from oxidative inactivation along with MXR1. Involved in the regulation of lifespan. In Saccharomyces cerevisiae (strain ATCC 204508 / S288c) (Baker's yeast), this protein is Peptide methionine sulfoxide reductase 2 (MXR2).